We begin with the raw amino-acid sequence, 369 residues long: Prenyltransferase malB (369 aa).

Residue Glu87 coordinates substrate. 2 residues coordinate dimethylallyl diphosphate: Arg100 and Tyr189. Tyr191 contributes to the substrate binding site.

The protein belongs to the tryptophan dimethylallyltransferase family.

In terms of biological role, prenyltransferase; part of the gene cluster that mediates the biosynthesis of malbrancheamide, a dichlorinated fungal indole alkaloid that belongs to a family of natural products containing a characteristic bicyclo[2.2.2]diazaoctane core. The first step of malbrancheamide biosynthesis involves coupling of L-proline and L-tryptophan by malG, a bimodular NRPS, to produce L-Pro-L-Trp aldehyde through reductive offloading. This compound undergoes spontaneous cyclization and dehydration to give a dienamine which is reverse prenylated at C-2 by malE. The other prenyltransferase present in the cluster, malB, displays modest activity, suggesting that may be a redundant gene in the pathway. Subsequently, a [4+2] Diels-Alder cyclo-addition catalyzed by the bifunctional enzyme malC forms the characteristic bicyclo[2.2.2]diazaoctane ring of premalbrancheamid. Finally, the flavin-dependent halogenase malA catalyzes the iterative dichlorination of the indole ring of premalbrancheamide to yield C-9 monochlorinated malbrancheamide B, C-8 monochlorinated isomalbrancheamide B, and dichlorinated malbrancheamide. MalA is also able to brominate premalbrancheamide at C-9 to yield malbrancheamide C, and, to a lesser extend, at C-8 to yield isomalbrancheamide C. Finally, malA can brominate C-9 monochlorinated malbrancheamide B at C-8 to yield malbrancheamide D, or C-8 monochlorinated isomalbrancheamide B at C-9 to produce isomalbrancheamide D. This is Prenyltransferase malB from Malbranchea aurantiaca.